We begin with the raw amino-acid sequence, 345 residues long: S-adenosylmethionine:tRNA ribosyltransferase-isomerase (345 aa).

Belongs to the QueA family. In terms of assembly, monomer.

The protein resides in the cytoplasm. It catalyses the reaction 7-aminomethyl-7-carbaguanosine(34) in tRNA + S-adenosyl-L-methionine = epoxyqueuosine(34) in tRNA + adenine + L-methionine + 2 H(+). It functions in the pathway tRNA modification; tRNA-queuosine biosynthesis. Its function is as follows. Transfers and isomerizes the ribose moiety from AdoMet to the 7-aminomethyl group of 7-deazaguanine (preQ1-tRNA) to give epoxyqueuosine (oQ-tRNA). This Shewanella loihica (strain ATCC BAA-1088 / PV-4) protein is S-adenosylmethionine:tRNA ribosyltransferase-isomerase.